A 391-amino-acid polypeptide reads, in one-letter code: GTPase Obg (391 aa).

One can recognise an Obg domain in the interval 1–159; the sequence is MKFLDQAKIF…IWVWLRLKLI (159 aa). The OBG-type G domain occupies 160-327; the sequence is ADAGLIGLPN…VLRVMATHVD (168 aa). GTP-binding positions include 166–173, 191–195, 212–215, 279–282, and 308–310; these read GLPNAGKS, FTTLH, DIPG, SKID, and SAI. Residues Ser-173 and Thr-193 each coordinate Mg(2+). Positions 352-391 are disordered; it reads TGIDHGYNRPSAVVDWEDAPFDDDDDDDGDESGDKGQWTR. Residues 366–382 are compositionally biased toward acidic residues; the sequence is DWEDAPFDDDDDDDGDE.

The protein belongs to the TRAFAC class OBG-HflX-like GTPase superfamily. OBG GTPase family. As to quaternary structure, monomer. It depends on Mg(2+) as a cofactor.

The protein localises to the cytoplasm. An essential GTPase which binds GTP, GDP and possibly (p)ppGpp with moderate affinity, with high nucleotide exchange rates and a fairly low GTP hydrolysis rate. Plays a role in control of the cell cycle, stress response, ribosome biogenesis and in those bacteria that undergo differentiation, in morphogenesis control. This chain is GTPase Obg, found in Rhodospirillum rubrum (strain ATCC 11170 / ATH 1.1.1 / DSM 467 / LMG 4362 / NCIMB 8255 / S1).